The following is a 555-amino-acid chain: Cilia- and flagella-associated protein 184 (555 aa).

Basic and acidic residues predominate over residues 1–12 (MDVSSEHTKDPG). Residues 1–202 (MDVSSEHTKD…KSQEEGKRLY (202 aa)) are disordered. Composition is skewed to acidic residues over residues 41 to 54 (GELESEPEEEEEEQ) and 95 to 105 (PEPEEPAEVGA). Low complexity predominate over residues 106 to 117 (EEPAQPEPGAGP). A compositionally biased stretch (acidic residues) spans 118–131 (EELEAEAGAEELEQ). Residues 174 to 202 (ETQRDGAESKERDGEGRPAKSQEEGKRLY) show a composition bias toward basic and acidic residues. Coiled-coil stretches lie at residues 305–441 (YHQE…NSVQ) and 505–531 (DSLLRDLEEKVDKTELLHRRLESLKRH).

The protein belongs to the CFAP184 family. Forms a complex with CFAP263; the interaction is required for functional activity in cilia.

Its subcellular location is the cell projection. The protein localises to the cilium. It localises to the cytoplasm. It is found in the cytoskeleton. The protein resides in the microtubule organizing center. Its subcellular location is the centrosome. In complex with CFAP263, acts as a regulator of ciliary beating that connects radial spoke 3 (RS3) to the inner dynein arm (IDA) and the nexin-dynein regulatory complex (N-DRC). The complex is positioned parallel to N-DRC and forms a connection between the arch at the base of RS3, the IDA tail and N-DRC. The polypeptide is Cilia- and flagella-associated protein 184 (Homo sapiens (Human)).